We begin with the raw amino-acid sequence, 62 residues long: Protein DsrB (62 aa).

It belongs to the DsrB family.

In Escherichia fergusonii (strain ATCC 35469 / DSM 13698 / CCUG 18766 / IAM 14443 / JCM 21226 / LMG 7866 / NBRC 102419 / NCTC 12128 / CDC 0568-73), this protein is Protein DsrB.